Consider the following 215-residue polypeptide: GTP-binding nuclear protein Ran (215 aa).

The Small GTPase Ran-type domain occupies 6–170 (DIPTFKLVLV…LWLVRKLLGD (165 aa)). Residues 17–24 (DGGTGKTT), 35–41 (EKKYVAT), G67, 121–124 (NFVD), and 149–151 (SAK) contribute to the GTP site. A switch-I region spans residues 36–44 (KKYVATLGV). The switch-II stretch occupies residues 67–83 (GQEKFGGLRDGYYIQGQ). The tract at residues 210–215 (DDDEDL) is interaction with RANBP1.

The protein belongs to the small GTPase superfamily. Ran family. As to quaternary structure, monomer. Interacts with RANGAP1, which promotes RAN-mediated GTP hydrolysis. Interacts with KPNB1. Interaction with KPNB1 inhibits RANGAP1-mediated stimulation of GTPase activity. Interacts with RCC1 which promotes the exchange of RAN-bound GDP by GTP. Interaction with KPNB1 inhibits RCC1-mediated exchange of RAN-bound GDP by GTP. Interacts (GTP-bound form) with TNPO1; the interaction is direct. Interacts with KPNB1 and with TNPO1; both inhibit RAN GTPase activity. Interacts (via C-terminus) with RANBP1, which alleviates the inhibition of RAN GTPase activity. Interacts with RANGRF, which promotes the release of bound guanine nucleotide. RANGRF and RCC1 compete for an overlapping binding site on RAN. Identified in a complex with KPNA2 and CSE1L; interaction with RANBP1 mediates dissociation of RAN from this complex. Interaction with both RANBP1 and KPNA2 promotes dissociation of the complex between RAN and KPNB1. Identified in a complex composed of RAN, RANGAP1 and RANBP1. Identified in a complex that contains TNPO1, RAN and RANBP1. Identified in a nuclear export complex with XPO1. Interaction with RANBP1 or RANBP2 induces a conformation change in the complex formed by XPO1 and RAN that triggers the release of the nuclear export signal of cargo proteins. Component of a nuclear export receptor complex composed of KPNB1, RAN, SNUPN and XPO1. Mg(2+) serves as cofactor.

It is found in the nucleus. Its subcellular location is the nucleus envelope. The protein localises to the cytoplasm. The protein resides in the cytosol. Functionally, GTPase involved in nucleocytoplasmic transport, participating both to the import and the export from the nucleus of proteins and RNAs. Switches between a cytoplasmic GDP- and a nuclear GTP-bound state by nucleotide exchange and GTP hydrolysis. Nuclear import receptors such as importin beta bind their substrates only in the absence of GTP-bound RAN and release them upon direct interaction with GTP-bound RAN, while export receptors behave in the opposite way. Thereby, RAN controls cargo loading and release by transport receptors in the proper compartment and ensures the directionality of the transport. Interaction with RANBP1 induces a conformation change in the complex formed by XPO1 and RAN that triggers the release of the nuclear export signal of cargo proteins. RAN (GTP-bound form) triggers microtubule assembly at mitotic chromosomes and is required for normal mitotic spindle assembly and chromosome segregation. Required for normal progress through mitosis. The sequence is that of GTP-binding nuclear protein Ran (ran-1) from Onchocerca volvulus.